A 494-amino-acid polypeptide reads, in one-letter code: Membrane-bound lytic murein transglycosylase F (494 aa).

Residues 1–20 form the signal peptide; the sequence is MIKYLYVILLGLLLSGCQPA. The tract at residues 21–259 is non-LT domain; the sequence is EVVEIEASPK…HLNEKYFGHV (239 aa). An LT domain region spans residues 260–494; the sequence is KRFDYVDTRA…LKPKLGAGQP (235 aa). Residue Glu-304 is part of the active site. Residues 473-485 show a composition bias toward polar residues; it reads QSLASDSKTNNTL. The disordered stretch occupies residues 473–494; that stretch reads QSLASDSKTNNTLKPKLGAGQP.

The protein in the N-terminal section; belongs to the bacterial solute-binding protein 3 family. It in the C-terminal section; belongs to the transglycosylase Slt family.

Its subcellular location is the cell outer membrane. It catalyses the reaction Exolytic cleavage of the (1-&gt;4)-beta-glycosidic linkage between N-acetylmuramic acid (MurNAc) and N-acetylglucosamine (GlcNAc) residues in peptidoglycan, from either the reducing or the non-reducing ends of the peptidoglycan chains, with concomitant formation of a 1,6-anhydrobond in the MurNAc residue.. Murein-degrading enzyme that degrades murein glycan strands and insoluble, high-molecular weight murein sacculi, with the concomitant formation of a 1,6-anhydromuramoyl product. Lytic transglycosylases (LTs) play an integral role in the metabolism of the peptidoglycan (PG) sacculus. Their lytic action creates space within the PG sacculus to allow for its expansion as well as for the insertion of various structures such as secretion systems and flagella. This chain is Membrane-bound lytic murein transglycosylase F, found in Shewanella denitrificans (strain OS217 / ATCC BAA-1090 / DSM 15013).